The following is a 157-amino-acid chain: Arginine regulator (157 aa).

Belongs to the ArgR family.

Its subcellular location is the cytoplasm. It functions in the pathway amino-acid degradation; L-arginine degradation via ADI pathway. In terms of biological role, regulates the transcription of the arc operon, involved in arginine catabolism. In Streptococcus pyogenes serotype M3 (strain ATCC BAA-595 / MGAS315), this protein is Arginine regulator (argR1).